Reading from the N-terminus, the 200-residue chain is NADH-quinone oxidoreductase subunit C (200 aa).

This sequence belongs to the complex I 30 kDa subunit family. In terms of assembly, NDH-1 is composed of 14 different subunits. Subunits NuoB, C, D, E, F, and G constitute the peripheral sector of the complex.

It is found in the cell inner membrane. It carries out the reaction a quinone + NADH + 5 H(+)(in) = a quinol + NAD(+) + 4 H(+)(out). NDH-1 shuttles electrons from NADH, via FMN and iron-sulfur (Fe-S) centers, to quinones in the respiratory chain. The immediate electron acceptor for the enzyme in this species is believed to be ubiquinone. Couples the redox reaction to proton translocation (for every two electrons transferred, four hydrogen ions are translocated across the cytoplasmic membrane), and thus conserves the redox energy in a proton gradient. The chain is NADH-quinone oxidoreductase subunit C from Rhizobium johnstonii (strain DSM 114642 / LMG 32736 / 3841) (Rhizobium leguminosarum bv. viciae).